The primary structure comprises 274 residues: Orotidine 5'-phosphate decarboxylase (274 aa).

The span at 1–15 (MSAGRRSSGGRSAAA) shows a compositional bias: low complexity. The tract at residues 1-21 (MSAGRRSSGGRSAAAPRFTPP) is disordered. Substrate is bound by residues Asp32, Lys54, 99–108 (DLKLHDIPAT), Thr154, Arg215, Gln224, Gly244, and Arg245. Lys101 functions as the Proton donor in the catalytic mechanism.

It belongs to the OMP decarboxylase family. Type 1 subfamily. As to quaternary structure, homodimer.

The enzyme catalyses orotidine 5'-phosphate + H(+) = UMP + CO2. It participates in pyrimidine metabolism; UMP biosynthesis via de novo pathway; UMP from orotate: step 2/2. In terms of biological role, catalyzes the decarboxylation of orotidine 5'-monophosphate (OMP) to uridine 5'-monophosphate (UMP). This is Orotidine 5'-phosphate decarboxylase from Frankia casuarinae (strain DSM 45818 / CECT 9043 / HFP020203 / CcI3).